The primary structure comprises 132 residues: MSMQDTVGDMLTRIRNAQMANKVSVAMPSSKLRKSIADLLVNEGYVASAVVTEENNNKATLTIVLKYFEGKAVIETIQRFSRPGLRQHRGKDAIPTVKQGMGVAIVSTSQGIMSDRAARAAGIGGEIVAFVA.

The protein belongs to the universal ribosomal protein uS8 family. In terms of assembly, part of the 30S ribosomal subunit. Contacts proteins S5 and S12.

Functionally, one of the primary rRNA binding proteins, it binds directly to 16S rRNA central domain where it helps coordinate assembly of the platform of the 30S subunit. This Psychrobacter arcticus (strain DSM 17307 / VKM B-2377 / 273-4) protein is Small ribosomal subunit protein uS8.